The sequence spans 489 residues: Glycogen synthase (489 aa).

Lys-17 serves as a coordination point for ADP-alpha-D-glucose.

It belongs to the glycosyltransferase 1 family. Bacterial/plant glycogen synthase subfamily.

The catalysed reaction is [(1-&gt;4)-alpha-D-glucosyl](n) + ADP-alpha-D-glucose = [(1-&gt;4)-alpha-D-glucosyl](n+1) + ADP + H(+). The protein operates within glycan biosynthesis; glycogen biosynthesis. Its function is as follows. Synthesizes alpha-1,4-glucan chains using ADP-glucose. The protein is Glycogen synthase of Nitratidesulfovibrio vulgaris (strain ATCC 29579 / DSM 644 / CCUG 34227 / NCIMB 8303 / VKM B-1760 / Hildenborough) (Desulfovibrio vulgaris).